The sequence spans 221 residues: Queuosine precursor transporter (221 aa).

Residues 1–12 (MNVFSQTQRYKA) lie on the Cytoplasmic side of the membrane. A helical membrane pass occupies residues 13–33 (LFWLSLFHLLVITSSNYLVQL). A topological domain (periplasmic) is located at residue Pro-34. A helical transmembrane segment spans residues 35–55 (VSILGFHTTWGAFSFPFIFLA). Residues 56-70 (TDLTVRIFGAPLARR) lie on the Cytoplasmic side of the membrane. Residues 71 to 91 (IIFAVMIPALLISYVISSLFY) form a helical membrane-spanning segment. The Periplasmic portion of the chain corresponds to 92 to 97 (MGSWQG). The helical transmembrane segment at 98-118 (FGALAHFNLFVARIATASFMA) threads the bilayer. Topologically, residues 119–143 (YALGQILDVHVFNRLRQSRRWWLAP) are cytoplasmic. A helical transmembrane segment spans residues 144 to 164 (TASTLFGNVSDTLAFFFIAFW). Residues 165–184 (RSPDAFMAEHWMEIALVDYC) lie on the Periplasmic side of the membrane. A helical membrane pass occupies residues 185 to 205 (FKVLISIVFFLPMYGVLLNML). The Cytoplasmic segment spans residues 206–221 (LKRLADKSEINALQAS).

This sequence belongs to the vitamin uptake transporter (VUT/ECF) (TC 2.A.88) family. Q precursor transporter subfamily.

It localises to the cell inner membrane. Involved in the import of queuosine (Q) precursors, required for Q precursor salvage. Transports 7-cyano-7-deazaguanine (preQ(0)) and 7-aminomethyl-7-deazaguanine (preQ(1)), with a preference for preQ(0). The polypeptide is Queuosine precursor transporter (yhhQ) (Escherichia coli (strain K12)).